Consider the following 388-residue polypeptide: Succinate--CoA ligase [ADP-forming] subunit beta (388 aa).

An ATP-grasp domain is found at 9–244; it reads KQLFAEYGLP…PSQEDSREAH (236 aa). ATP contacts are provided by residues Lys-46, 53–55, Glu-99, Thr-102, and Glu-107; that span reads GRG. The Mg(2+) site is built by Asn-199 and Asp-213. Substrate contacts are provided by residues Asn-264 and 321–323; that span reads GIV.

The protein belongs to the succinate/malate CoA ligase beta subunit family. Heterotetramer of two alpha and two beta subunits. Mg(2+) is required as a cofactor.

The enzyme catalyses succinate + ATP + CoA = succinyl-CoA + ADP + phosphate. The catalysed reaction is GTP + succinate + CoA = succinyl-CoA + GDP + phosphate. It functions in the pathway carbohydrate metabolism; tricarboxylic acid cycle; succinate from succinyl-CoA (ligase route): step 1/1. Its function is as follows. Succinyl-CoA synthetase functions in the citric acid cycle (TCA), coupling the hydrolysis of succinyl-CoA to the synthesis of either ATP or GTP and thus represents the only step of substrate-level phosphorylation in the TCA. The beta subunit provides nucleotide specificity of the enzyme and binds the substrate succinate, while the binding sites for coenzyme A and phosphate are found in the alpha subunit. This is Succinate--CoA ligase [ADP-forming] subunit beta from Pseudoalteromonas translucida (strain TAC 125).